An 898-amino-acid polypeptide reads, in one-letter code: Chaperone protein ClpB 1 (898 aa).

Residues 6 to 148 form the Clp R domain; it reads PTKFTEQAWD…ELAIKAIRGS (143 aa). 2 repeat regions span residues 9-74 and 85-148; these read FTEQ…TNRQ and LGRS…IRGS. The interval 161 to 344 is NBD1; it reads EALDKYGRDL…RRFQQVYVKQ (184 aa). 208-215 lines the ATP pocket; it reads GEPGVGKT. The interval 345 to 560 is linker; sequence PSVDDTISIL…IAEIVAGWTG (216 aa). A coiled-coil region spans residues 395–536; that stretch reads IDLVDEAAAR…KESKLLEIQG (142 aa). The NBD2 stretch occupies residues 570–781; the sequence is ERQKLLQLEG…RIDDLIIFHT (212 aa). 620–627 contributes to the ATP binding site; the sequence is GPTGVGKT. The segment at 782–898 is C-terminal; the sequence is LKRDELRRIV…TAVEVEVLSS (117 aa).

This sequence belongs to the ClpA/ClpB family. As to quaternary structure, homohexamer. The oligomerization is ATP-dependent.

It is found in the cytoplasm. Functionally, part of a stress-induced multi-chaperone system, it is involved in the recovery of the cell from heat-induced damage, in cooperation with DnaK, DnaJ and GrpE. Acts before DnaK, in the processing of protein aggregates. Protein binding stimulates the ATPase activity; ATP hydrolysis unfolds the denatured protein aggregates, which probably helps expose new hydrophobic binding sites on the surface of ClpB-bound aggregates, contributing to the solubilization and refolding of denatured protein aggregates by DnaK. The protein is Chaperone protein ClpB 1 (clpB1) of Synechocystis sp. (strain ATCC 27184 / PCC 6803 / Kazusa).